We begin with the raw amino-acid sequence, 741 residues long: Ribosome-releasing factor 2, mitochondrial (741 aa).

The N-terminal 29 residues, 1–29 (MLKYEFLHGLQKRSHYLRQLSGQFFSRSY), are a transit peptide targeting the mitochondrion. Residues 31 to 310 (SKIRNIGILA…AVNSYLPAPE (280 aa)) form the tr-type G domain. GTP-binding positions include 40-47 (AHIDAGKT), 104-108 (DTPGH), and 158-161 (NKMD).

The protein belongs to the TRAFAC class translation factor GTPase superfamily. Classic translation factor GTPase family. EF-G/EF-2 subfamily.

Its subcellular location is the mitochondrion. In terms of biological role, mitochondrial GTPase that mediates the disassembly of ribosomes from messenger RNA at the termination of mitochondrial protein biosynthesis. Not involved in the GTP-dependent ribosomal translocation step during translation elongation. This Drosophila ananassae (Fruit fly) protein is Ribosome-releasing factor 2, mitochondrial.